Consider the following 168-residue polypeptide: I-Kappa-B like protein G2 (168 aa).

2 ANK repeats span residues 56–88 (SQRQCVHIVVCEDKVNAIKKLKVLLEMGADING) and 93–123 (GGNTPLHLAVHSNNYKLVKWLCKQPSINKTA).

The protein belongs to the polydnaviridae I-Kappa-B-like protein family.

Functionally, suppresses the host immune response through NF-kappa-B inactivation. Possesses ankyrin repeat domains required for NF-kappa-B binding but lacks the regulatory regions required for dissociation from NF-kappa-B and degradation. Therefore, prevents host NF-kappa-B release and subsequent activation. The protein is I-Kappa-B like protein G2 (G4) of Microplitis demolitor (Parasitoid wasp).